Here is a 155-residue protein sequence, read N- to C-terminus: NADPH-dependent 7-cyano-7-deazaguanine reductase (155 aa).

C53 serves as the catalytic Thioimide intermediate. D60 functions as the Proton donor in the catalytic mechanism. Residues 75 to 77 and 94 to 95 each bind substrate; these read VES and HE.

It belongs to the GTP cyclohydrolase I family. QueF type 1 subfamily.

It is found in the cytoplasm. The enzyme catalyses 7-aminomethyl-7-carbaguanine + 2 NADP(+) = 7-cyano-7-deazaguanine + 2 NADPH + 3 H(+). It functions in the pathway tRNA modification; tRNA-queuosine biosynthesis. In terms of biological role, catalyzes the NADPH-dependent reduction of 7-cyano-7-deazaguanine (preQ0) to 7-aminomethyl-7-deazaguanine (preQ1). The protein is NADPH-dependent 7-cyano-7-deazaguanine reductase of Brucella anthropi (strain ATCC 49188 / DSM 6882 / CCUG 24695 / JCM 21032 / LMG 3331 / NBRC 15819 / NCTC 12168 / Alc 37) (Ochrobactrum anthropi).